The chain runs to 126 residues: Fluoride-specific ion channel FluC (126 aa).

A run of 4 helical transmembrane segments spans residues 4 to 24 (PLLSIALGSVLGAWLRWFLGL), 33 to 53 (IPLGTVTVNLVGGFIIGFAMA), 67 to 87 (FVITGFCGALTTFSTFSIEIV), and 97 to 117 (MAMLAISIHLIGSLIFTCLGL). Na(+) is bound by residues Gly-74 and Thr-77.

Belongs to the fluoride channel Fluc/FEX (TC 1.A.43) family.

Its subcellular location is the cell inner membrane. It catalyses the reaction fluoride(in) = fluoride(out). With respect to regulation, na(+) is not transported, but it plays an essential structural role and its presence is essential for fluoride channel function. Fluoride-specific ion channel. Important for reducing fluoride concentration in the cell, thus reducing its toxicity. This is Fluoride-specific ion channel FluC from Acinetobacter baumannii (strain ATCC 17978 / DSM 105126 / CIP 53.77 / LMG 1025 / NCDC KC755 / 5377).